A 341-amino-acid chain; its full sequence is Guanine nucleotide-binding protein subunit beta (341 aa).

7 WD repeats span residues 54 to 93 (GHLA…KVHA), 96 to 135 (LRSS…GNVR), 142 to 180 (GHTG…QTTA), 183 to 222 (GHTG…CKQT), 225 to 264 (GHES…EIGM), 269 to 308 (NIIC…RAGV), and 311 to 341 (GHDN…RIWN).

The protein belongs to the WD repeat G protein beta family. G proteins are composed of 3 units, alpha, beta and gamma. The G protein beta1-gamma2 dimer interacts with calmodulin. In terms of tissue distribution, abundantly expressed in gills, gonad and mantle and at lower levels in digestion gland. Not detected in muscle.

Its subcellular location is the cytoplasm. Functionally, guanine nucleotide-binding proteins (G proteins) are involved as a modulator or transducer in various transmembrane signaling systems. The beta and gamma chains are required for the GTPase activity, for replacement of GDP by GTP, and for G protein-effector interaction. The chain is Guanine nucleotide-binding protein subunit beta from Pinctada fucata (Akoya pearl oyster).